The sequence spans 436 residues: GTPase Der (436 aa).

2 EngA-type G domains span residues 3–167 (NIVA…PIKP) and 177–352 (PRFA…ENRQ). GTP is bound by residues 9–16 (GRPNVGKS), 56–60 (DTGGY), 119–122 (NKVD), 183–190 (GRPNAGKS), 230–234 (DTAGI), and 295–298 (NKWD). One can recognise a KH-like domain in the interval 353–436 (QRISTSKFNE…VPIDIYIREK (84 aa)).

Belongs to the TRAFAC class TrmE-Era-EngA-EngB-Septin-like GTPase superfamily. EngA (Der) GTPase family. In terms of assembly, associates with the 50S ribosomal subunit.

Its function is as follows. GTPase that plays an essential role in the late steps of ribosome biogenesis. The chain is GTPase Der from Flavobacterium psychrophilum (strain ATCC 49511 / DSM 21280 / CIP 103535 / JIP02/86).